A 177-amino-acid polypeptide reads, in one-letter code: Large ribosomal subunit protein uL6 (177 aa).

Belongs to the universal ribosomal protein uL6 family. Part of the 50S ribosomal subunit.

In terms of biological role, this protein binds to the 23S rRNA, and is important in its secondary structure. It is located near the subunit interface in the base of the L7/L12 stalk, and near the tRNA binding site of the peptidyltransferase center. In Klebsiella pneumoniae (strain 342), this protein is Large ribosomal subunit protein uL6.